The chain runs to 200 residues: Serine/arginine-rich splicing factor RSZ23 (200 aa).

Positions 2–71 (ARVYVGNLDP…NGWRVELSTK (70 aa)) constitute an RRM domain. The CCHC-type zinc-finger motif lies at 86 to 103 (MKCYECGEPGHFARECRL). The segment at 105–200 (IGSGGLGSGR…REESPYANNA (96 aa)) is disordered. Positions 113–139 (GRRRSRSRSRSPRYRGRSRSRSPRYRR) are enriched in basic residues.

Belongs to the splicing factor SR family. In terms of processing, extensively phosphorylated on serine residues in the RS domain. As to expression, expressed in roots, leaves and immature seeds.

It is found in the nucleus. Its function is as follows. Involved in pre-mRNA splicing. In protoplast assay, enhances splicing efficiency of WAXY intron 1 and alters the selection of the 5'-splice sites by stimulating site 1 (proximal site). This chain is Serine/arginine-rich splicing factor RSZ23 (RSZ23), found in Oryza sativa subsp. japonica (Rice).